The primary structure comprises 386 residues: Glucose-1-phosphate adenylyltransferase (386 aa).

Residues Tyr-100, Gly-165, 180–181 (EK), and Ser-191 contribute to the alpha-D-glucose 1-phosphate site.

It belongs to the bacterial/plant glucose-1-phosphate adenylyltransferase family. As to quaternary structure, homotetramer.

The enzyme catalyses alpha-D-glucose 1-phosphate + ATP + H(+) = ADP-alpha-D-glucose + diphosphate. It functions in the pathway glycan biosynthesis; glycogen biosynthesis. Functionally, involved in the biosynthesis of ADP-glucose, a building block required for the elongation reactions to produce glycogen. Catalyzes the reaction between ATP and alpha-D-glucose 1-phosphate (G1P) to produce pyrophosphate and ADP-Glc. The sequence is that of Glucose-1-phosphate adenylyltransferase from Clostridium botulinum (strain Eklund 17B / Type B).